The chain runs to 221 residues: Holliday junction branch migration complex subunit RuvA (221 aa).

Residues 1–61 (MQIYQFGKIV…DYTKITYGFA (61 aa)) are domain I. Positions 62–139 (SFRERILFED…RFNENHKNQT (78 aa)) are domain II. The disordered stretch occupies residues 133–155 (ENHKNQTEETNQDSQEKELEKKD). The flexible linker stretch occupies residues 140–166 (EETNQDSQEKELEKKDDLADITIQKSN). Basic and acidic residues predominate over residues 146-155 (SQEKELEKKD). Positions 167–221 (LEDKTAANLEDTLKMLGFKPRQIDYALTKVEPNENFENLIENAIKIISNAREFRN) are domain III.

Belongs to the RuvA family. As to quaternary structure, homotetramer. Forms an RuvA(8)-RuvB(12)-Holliday junction (HJ) complex. HJ DNA is sandwiched between 2 RuvA tetramers; dsDNA enters through RuvA and exits via RuvB. An RuvB hexamer assembles on each DNA strand where it exits the tetramer. Each RuvB hexamer is contacted by two RuvA subunits (via domain III) on 2 adjacent RuvB subunits; this complex drives branch migration. In the full resolvosome a probable DNA-RuvA(4)-RuvB(12)-RuvC(2) complex forms which resolves the HJ.

It localises to the cytoplasm. In terms of biological role, the RuvA-RuvB-RuvC complex processes Holliday junction (HJ) DNA during genetic recombination and DNA repair, while the RuvA-RuvB complex plays an important role in the rescue of blocked DNA replication forks via replication fork reversal (RFR). RuvA specifically binds to HJ cruciform DNA, conferring on it an open structure. The RuvB hexamer acts as an ATP-dependent pump, pulling dsDNA into and through the RuvAB complex. HJ branch migration allows RuvC to scan DNA until it finds its consensus sequence, where it cleaves and resolves the cruciform DNA. The protein is Holliday junction branch migration complex subunit RuvA of Mesomycoplasma hyopneumoniae (strain J / ATCC 25934 / NCTC 10110) (Mycoplasma hyopneumoniae).